A 174-amino-acid chain; its full sequence is Ly6/PLAUR domain-containing protein 6 (174 aa).

The signal sequence occupies residues 1–22 (MEPWPLMAWGLMLTAITGWIKA). A UPAR/Ly6 domain is found at 47–141 (FKCFTCEDAP…PRNETDAIFS (95 aa)). Cystine bridges form between Cys-49-Cys-77, Cys-52-Cys-61, Cys-70-Cys-96, Cys-102-Cys-121, Cys-107-Cys-118, and Cys-122-Cys-127. Asn-134 and Asn-147 each carry an N-linked (GlcNAc...) asparagine glycan. A lipid anchor (GPI-anchor amidated serine) is attached at Ser-149. Residues 150-174 (AQSTQTLPLLLLSVSITSLMLHSIN) constitute a propeptide, removed in mature form.

Interacts with fzd8 and lrp6.

The protein resides in the cell membrane. It localises to the membrane raft. Functionally, acts as an important regulator of embryogenesis through its enhancement of Wnt/beta-catenin signaling. Positively regulates Wnt/beta-catenin signaling by ensuring phosphorylation of lrp6 specifically in plasma membrane rafts and its subsequent internalization into signaling-competent vesicles. Essential for the wnt8-mediated patterning of the mesoderm and neuroectoderm during gastrulation. This chain is Ly6/PLAUR domain-containing protein 6 (lypd6), found in Danio rerio (Zebrafish).